Reading from the N-terminus, the 401-residue chain is Argininosuccinate synthase (401 aa).

9 to 17 (AYSGGLDTS) provides a ligand contact to ATP. Residue Y86 coordinates L-citrulline. G116 is an ATP binding site. 3 residues coordinate L-aspartate: T118, N122, and D123. N122 is an L-citrulline binding site. L-citrulline is bound by residues R126, S174, S183, E259, and Y271.

The protein belongs to the argininosuccinate synthase family. Type 1 subfamily. Homotetramer.

The protein resides in the cytoplasm. It catalyses the reaction L-citrulline + L-aspartate + ATP = 2-(N(omega)-L-arginino)succinate + AMP + diphosphate + H(+). It participates in amino-acid biosynthesis; L-arginine biosynthesis; L-arginine from L-ornithine and carbamoyl phosphate: step 2/3. This Bacillus mycoides (strain KBAB4) (Bacillus weihenstephanensis) protein is Argininosuccinate synthase.